A 189-amino-acid polypeptide reads, in one-letter code: Elongation factor P (189 aa).

This sequence belongs to the elongation factor P family.

The protein localises to the cytoplasm. Its pathway is protein biosynthesis; polypeptide chain elongation. In terms of biological role, involved in peptide bond synthesis. Stimulates efficient translation and peptide-bond synthesis on native or reconstituted 70S ribosomes in vitro. Probably functions indirectly by altering the affinity of the ribosome for aminoacyl-tRNA, thus increasing their reactivity as acceptors for peptidyl transferase. The sequence is that of Elongation factor P from Orientia tsutsugamushi (strain Ikeda) (Rickettsia tsutsugamushi).